A 68-amino-acid chain; its full sequence is Large ribosomal subunit protein bL35 (68 aa).

It belongs to the bacterial ribosomal protein bL35 family.

This chain is Large ribosomal subunit protein bL35, found in Rickettsia akari (strain Hartford).